We begin with the raw amino-acid sequence, 140 residues long: Endoribonuclease YbeY (140 aa).

Zn(2+) contacts are provided by His-105, His-109, and Asp-115.

It belongs to the endoribonuclease YbeY family. Requires Zn(2+) as cofactor.

The protein resides in the cytoplasm. In terms of biological role, single strand-specific metallo-endoribonuclease involved in late-stage 70S ribosome quality control and in maturation of the 3' terminus of the 16S rRNA. This Flavobacterium psychrophilum (strain ATCC 49511 / DSM 21280 / CIP 103535 / JIP02/86) protein is Endoribonuclease YbeY.